Reading from the N-terminus, the 1021-residue chain is Probable LRR receptor-like serine/threonine-protein kinase RFK1 (1021 aa).

The N-terminal stretch at 1 to 39 is a signal peptide; it reads MISLYQILAEKKKKKKNDLNIFAFSVFAIICFKFYSVNA. Over 41–625 the chain is Extracellular; it reads KLPQQEVDAL…PKTGMSPGAY (585 aa). N-linked (GlcNAc...) asparagine glycosylation is present at Asn96. 2 LRR repeats span residues 99–122 and 123–146; these read DCHV…IVKL and PYLR…WASS. 3 N-linked (GlcNAc...) asparagine glycosylation sites follow: Asn136, Asn147, and Asn168. 5 LRR repeats span residues 148-168, 169-192, 193-216, 218-240, and 241-266; these read LTFI…EFGN, SSLT…LGNL, VHLK…LARL, NMTD…IQNW, and KQLE…VLSN. N-linked (GlcNAc...) asparagine glycosylation occurs at Asn218. N-linked (GlcNAc...) asparagine glycans are attached at residues Asn287 and Asn300. 4 LRR repeats span residues 288–312, 313–336, 338–359, and 361–381; these read VTGL…LSHL, KELE…AQAE, LRFI…LLRD, and ITVD…RACR. N-linked (GlcNAc...) asparagine glycosylation is found at Asn486 and Asn512. The helical transmembrane segment at 626-646 threads the bilayer; sequence IAIGIGAPCLIIFILGFLWIC. The Cytoplasmic portion of the chain corresponds to 647–1021; that stretch reads GCLPRCGRQR…QERKKEESRP (375 aa). Residue Thr670 is modified to Phosphothreonine. A Protein kinase domain is found at 681–956; that stretch reads FNPTNKIGEG…EVVAMLEGLY (276 aa). ATP is bound by residues 687-695 and Lys709; that span reads IGEGGFGAV. The residue at position 754 (Tyr754) is a Phosphotyrosine. Catalysis depends on Asp807, which acts as the Proton acceptor. Ser840 carries the post-translational modification Phosphoserine. 2 positions are modified to phosphothreonine: Thr841 and Thr846. Position 854 is a phosphotyrosine (Tyr854). Residues 985 to 1021 form a disordered region; that stretch reads ENNSKTQCSVKSYPSSSSTSSGAGQAVQERKKEESRP. The segment covering 993–1005 has biased composition (low complexity); sequence SVKSYPSSSSTSS. Over residues 1012-1021 the composition is skewed to basic and acidic residues; it reads QERKKEESRP.

Belongs to the protein kinase superfamily. Ser/Thr protein kinase family. As to expression, mostly expressed in flower buds, especially in stamens.

Its subcellular location is the membrane. The catalysed reaction is L-seryl-[protein] + ATP = O-phospho-L-seryl-[protein] + ADP + H(+). It catalyses the reaction L-threonyl-[protein] + ATP = O-phospho-L-threonyl-[protein] + ADP + H(+). The sequence is that of Probable LRR receptor-like serine/threonine-protein kinase RFK1 (RKF1) from Arabidopsis thaliana (Mouse-ear cress).